Consider the following 218-residue polypeptide: Elongation factor Ts (218 aa).

Residues T82–V85 form an involved in Mg(2+) ion dislocation from EF-Tu region.

The protein belongs to the EF-Ts family.

It localises to the cytoplasm. Associates with the EF-Tu.GDP complex and induces the exchange of GDP to GTP. It remains bound to the aminoacyl-tRNA.EF-Tu.GTP complex up to the GTP hydrolysis stage on the ribosome. This Prochlorococcus marinus (strain MIT 9215) protein is Elongation factor Ts.